The following is a 96-amino-acid chain: UPF0235 protein YggU (96 aa).

Belongs to the UPF0235 family.

This Salmonella agona (strain SL483) protein is UPF0235 protein YggU.